The following is a 54-amino-acid chain: Conotoxin mr5.4b (54 aa).

The first 14 residues, 1–14 (ILLLLIASAPSVDA), serve as a signal peptide directing secretion. A propeptide spanning residues 15–40 (QLKTKDDVPLASFHANVKRTLQKLLN) is cleaved from the precursor. A 4-carboxyglutamate modification is found at glutamate 52.

It belongs to the conotoxin T superfamily. In terms of processing, contains 2 disulfide bonds that can be either 'C1-C3, C2-C4' or 'C1-C4, C2-C3', since these disulfide connectivities have been observed for conotoxins with cysteine framework V (for examples, see AC P0DQQ7 and AC P81755). Expressed by the venom duct.

The protein localises to the secreted. This Conus marmoreus (Marble cone) protein is Conotoxin mr5.4b.